A 559-amino-acid polypeptide reads, in one-letter code: Dihydroxy-acid dehydratase 2 (559 aa).

Residue C53 coordinates [2Fe-2S] cluster. Residue D85 coordinates Mg(2+). [2Fe-2S] cluster is bound at residue C126. Mg(2+)-binding residues include D127 and K128. K128 is subject to N6-carboxylysine. C195 contacts [2Fe-2S] cluster. Residue E446 participates in Mg(2+) binding. The Proton acceptor role is filled by S472.

It belongs to the IlvD/Edd family. Homodimer. The cofactor is [2Fe-2S] cluster. Mg(2+) serves as cofactor.

The catalysed reaction is (2R)-2,3-dihydroxy-3-methylbutanoate = 3-methyl-2-oxobutanoate + H2O. The enzyme catalyses (2R,3R)-2,3-dihydroxy-3-methylpentanoate = (S)-3-methyl-2-oxopentanoate + H2O. It participates in amino-acid biosynthesis; L-isoleucine biosynthesis; L-isoleucine from 2-oxobutanoate: step 3/4. The protein operates within amino-acid biosynthesis; L-valine biosynthesis; L-valine from pyruvate: step 3/4. In terms of biological role, functions in the biosynthesis of branched-chain amino acids. Catalyzes the dehydration of (2R,3R)-2,3-dihydroxy-3-methylpentanoate (2,3-dihydroxy-3-methylvalerate) into 2-oxo-3-methylpentanoate (2-oxo-3-methylvalerate) and of (2R)-2,3-dihydroxy-3-methylbutanoate (2,3-dihydroxyisovalerate) into 2-oxo-3-methylbutanoate (2-oxoisovalerate), the penultimate precursor to L-isoleucine and L-valine, respectively. This is Dihydroxy-acid dehydratase 2 from Pseudoalteromonas translucida (strain TAC 125).